The primary structure comprises 543 residues: Acrosin-binding protein (543 aa).

A signal peptide spans 1–25 (MGQPAAGSILTLLRVLLLPLGPALA). The interval 26-106 (QDSPSAPTPG…ASWFESFCQF (81 aa)) is pro-ACR binding. Positions 26-276 (QDSPSAPTPG…DPHSFTARVR (251 aa)) are cleaved as a propeptide — removed in mature form. Positions 187 to 239 (AGQEQAAGHKQEQGQEQHKQDPTQEHKQDDGQEQEEQEEEQEEEGKQEEGQSV) are disordered. Over residues 193–216 (AGHKQEQGQEQHKQDPTQEHKQDD) the composition is skewed to basic and acidic residues. A compositionally biased stretch (acidic residues) spans 217–232 (GQEQEEQEEEQEEEGK). The interval 319–427 (LPHKEALLVL…TQAGTSESGR (109 aa)) is pro-ACR binding.

In terms of assembly, binds proacrosin (ACR). Does not bind the mature form of ACR. Post-translationally, the N-terminus is blocked. In terms of processing, phosphorylated on Tyr residues in capacitated sperm. Synthesized as a 60-kDa precursor, the 32-kDa mature form is post-translationally produced by the removal of the N-terminal half of the precursor during sperm maturation in the testis and/or epididymis. In terms of tissue distribution, specifically expressed in testis.

The protein resides in the secreted. It is found in the cytoplasmic vesicle. It localises to the secretory vesicle. The protein localises to the acrosome. Its function is as follows. Acrosomal protein that maintains proacrosin (pro-ACR) as an enzymatically inactive zymogen in the acrosome. Involved also in the acrosome formation. The sequence is that of Acrosin-binding protein (ACRBP) from Cavia porcellus (Guinea pig).